The following is a 465-amino-acid chain: Phosphatidylserine synthase 1 (465 aa).

Over 1 to 35 (MATTFRSQTLSKDDVNYRMHFRMINEQQVEDITIQ) the chain is Cytoplasmic. The helical transmembrane segment at 36–56 (FFYKPHTISLLTVTVLSLMYF) threads the bilayer. Residues 57–70 (AFTRDDGDPDSNLR) lie on the Lumenal side of the membrane. A helical transmembrane segment spans residues 71–91 (VGLILLVSFFLVISVLAFPNG). Residues 92 to 102 (PFTRPHPAIWR) lie on the Cytoplasmic side of the membrane. A helical membrane pass occupies residues 103–123 (IVFGLSVLYFLFLVFIIFLNW). Over 124 to 286 (DQVKALMFWL…WLDPKSSLQR (163 aa)) the chain is Lumenal. Residues 287–307 (VMGVYLFMIIWQLTELNTFFL) traverse the membrane as a helical segment. At 308–309 (KH) the chain is on the cytoplasmic side. A helical transmembrane segment spans residues 310–330 (IFVFPACHALSWCRILFIGII). Residues 331 to 355 (TAPTVRQYYAYLTDTQCKRVGTQCW) are Lumenal-facing. The helical transmembrane segment at 356–376 (VFGAIAFLEALACIKFGQDLF) threads the bilayer. The Cytoplasmic segment spans residues 377-380 (SKTQ). Residues 381-401 (ILYVILWLVCLAFITFLCLYV) form a helical membrane-spanning segment. Residues 402-465 (MVWYAENYGP…DSRTINGMEK (64 aa)) lie on the Lumenal side of the membrane. The interval 446–465 (CSTRKRRDSGDSRTINGMEK) is disordered.

Belongs to the phosphatidyl serine synthase family.

It localises to the endoplasmic reticulum membrane. It carries out the reaction a 1,2-diacyl-sn-glycero-3-phosphoethanolamine + L-serine = a 1,2-diacyl-sn-glycero-3-phospho-L-serine + ethanolamine. The enzyme catalyses a 1,2-diacyl-sn-glycero-3-phosphocholine + L-serine = a 1,2-diacyl-sn-glycero-3-phospho-L-serine + choline. It participates in phospholipid metabolism; phosphatidylserine biosynthesis. Its function is as follows. Catalyzes a base-exchange reaction in which the polar head group of phosphatidylethanolamine (PE) or phosphatidylcholine (PC) is replaced by L-serine. Catalyzes mainly the conversion of phosphatidylcholine but also converts, in vitro and to a lesser extent, phosphatidylethanolamine. This Danio rerio (Zebrafish) protein is Phosphatidylserine synthase 1 (ptdss1).